We begin with the raw amino-acid sequence, 447 residues long: Argininosuccinate synthase (447 aa).

Residues 20-28 (AFSGGLDTS) and alanine 46 each bind ATP. Tyrosine 102 provides a ligand contact to L-citrulline. Residues glycine 132 and threonine 134 each coordinate ATP. 3 residues coordinate L-aspartate: threonine 134, asparagine 138, and aspartate 139. Residue asparagine 138 participates in L-citrulline binding. Aspartate 139 contributes to the ATP binding site. Positions 142 and 195 each coordinate L-citrulline. Aspartate 197 provides a ligand contact to ATP. L-citrulline-binding residues include threonine 204, glutamate 206, and glutamate 283.

This sequence belongs to the argininosuccinate synthase family. Type 2 subfamily. In terms of assembly, homotetramer.

Its subcellular location is the cytoplasm. It catalyses the reaction L-citrulline + L-aspartate + ATP = 2-(N(omega)-L-arginino)succinate + AMP + diphosphate + H(+). It participates in amino-acid biosynthesis; L-arginine biosynthesis; L-arginine from L-ornithine and carbamoyl phosphate: step 2/3. This is Argininosuccinate synthase from Neisseria meningitidis serogroup C / serotype 2a (strain ATCC 700532 / DSM 15464 / FAM18).